The primary structure comprises 293 residues: 3-hydroxybutyrate-oligomer hydrolase (293 aa).

Belongs to the AB hydrolase superfamily.

It localises to the cytoplasm. It carries out the reaction (3R)-hydroxybutanoate pentamer + H2O = (3R)-hydroxybutanoate tetramer + (R)-3-hydroxybutanoate + H(+). The enzyme catalyses (3R)-hydroxybutanoate tetramer + H2O = (3R)-hydroxybutanoate trimer + (R)-3-hydroxybutanoate + H(+). The catalysed reaction is (3R)-hydroxybutanoate trimer + H2O = (3R)-hydroxybutanoate dimer + (R)-3-hydroxybutanoate + H(+). It catalyses the reaction (3R)-hydroxybutanoate dimer + H2O = 2 (R)-3-hydroxybutanoate + H(+). It carries out the reaction [(3R)-hydroxybutanoate](n) + H2O = [(3R)-hydroxybutanoate](n-1) + (R)-3-hydroxybutanoate + H(+). Its function is as follows. Catalyzes the degradation of various 3-hydroxybutyrate (3HB) oligomers at a high specific activity and artificial amorphous poly(3-hydroxybutyrate) (PHB) at a lower specific activity. Hydrolyzes the 3HB pentamer most efficiently than the tetramer, trimer and dimer. Does not hydrolyze native PHB granules and semicrystalline PHB. Participates in the mobilization of PHB along with other hydrolases. The chain is 3-hydroxybutyrate-oligomer hydrolase from Cupriavidus necator (strain ATCC 17699 / DSM 428 / KCTC 22496 / NCIMB 10442 / H16 / Stanier 337) (Ralstonia eutropha).